The chain runs to 276 residues: uncharacterized protein (276 aa).

This is an uncharacterized protein from Acanthamoeba polyphaga mimivirus (APMV).